The following is a 1693-amino-acid chain: MEAHQFIKAPGITTAIEQAALAAANSALANAVVVRPFLSHQQIEILINLMQPRQLVFRPEVFWNHPIQRVIHNELELYCRARSGRCLEIGAHPRSINDNPNVVHRCFLRPAGRDVQRWYTAPTRGPAANCRRSALRGLPAADRTYCFDGFSGCNFPAETGIALYSLHDMSPSDVAEAMFRHGMTRLYAALHLPPEVLLPPGTYRTASYLLIHDGRRVVVTYEGDTSAGYNHDVSNLRSWIRTTKVTGDHPLVIERVRAIGCHFVLLLTAAPEPSPMPYVPYPRSTEVYVRSIFGPGGTPSLFPTSCSTKSTFHAVPAHIWDRLMLFGATLDDQAFCCSRLMTYLRGISYKVTVGTLVANEGWNASEDALTAVITAAYLTICHQRYLRTQAISKGMRRLEREHAQKFITRLYSWLFEKSGRDYIPGRQLEFYAQCRRWLSAGFHLDPRVLVFDESAPCHCRTAIRKAVSKFCCFMKWLGQECTCFLQPAEGVVGDQGHDNEAYEGSDVDPAESAISDISGSYVVPGTALQPLYQALDLPAEIVARAGRLTATVKVSQVDGRIDCETLLGNKTFRTSFVDGAVLETNGPERHNLSFDASQSTMAAGPFSLTYAASAAGLEVRYVAAGLDHRAVFAPGVSPRSAPGEVTAFCSALYRFNREAQRLSLTGNFWFHPEGLLGPFAPFSPGHVWESANPFCGESTLYTRTWSEVDAVPSPAQPDLGFTSEPSIPSRAATPTPAAPLPPPAPDPSPTLSAPARGEPAPGATARAPAITHQTARHRRLLFTYPDGSKVFAGSLFESTCTWLVNASNVDHRPGGGLCHAFYQRYPASFDAASFVMRDGAAAYTLTPRPIIHAVAPDYRLEHNPKRLEAAYRETCSRLGTAAYPLLGTGIYQVPIGPSFDAWERNHRPGDELYLPELAARWFEANRPTCPTLTITEDVARTANLAIELDSATDVGRACAGCRVTPGVVQYQFTAGVPGSGKSRSITQADVDVVVVPTRELRNAWRRRGFAAFTPHTAARVTQGRRVVIDEAPSLPPHLLLLHMQRAATVHLLGDPNQIPAIDFEHAGLVPAIRPDLAPTSWWHVTHRCPADVCELIRGAYPMIQTTSRVLRSLFWGEPAVGQKLVFTQAAKAANPGSVTVHEAQGATYTETTIIATADARGLIQSSRAHAIVALTRHTEKCVIIDAPGLLREVGISDAIVNNFFLAGGEIGHQRPSVIPRGNPDANVDTLAAFPPSCQISAFHQLAEELGHRPAPVAAVLPPCPELEQGLLYLPQELTTCDSVVTFELTDIVHCRMAAPSQRKAVLSTLVGRYGRRTKLYNASHSDVRDSLARFIPAIGPVQVTTCELYELVEAMVEKGQDGSAVLELDLCSRDVSRITFFQKDCNKFTTGETIAHGKVGQGISAWSKTFCALFGPWFRAIEKAILALLPQGVFYGDAFDDTVFSAAVAAAKASMVFENDFSEFDSTQNNFSLGLECAIMEECGMPQWLIRLYHLIRSAWILQAPKESLRGFWKKHSGEPGTLLWNTVWNMAVITHCYDFRDLQVAAFKGDDSIVLCSEYRQSPGAAVLIAGCGLKLKVDFRPIGLYAGVVVAPGLGALPDVVRFAGRLTEKNWGPGPERAEQLRLAVSDFLRKLTNVAQMCVDVVSRVYGVSPGLVHNLIGMLQAVADGKAHFTESVKPVLDLTNSILCRVE.

One can recognise an Alphavirus-like MT domain in the interval Val56–Ile240. A methyltransferase region spans residues Glu60–Ile240. Residues Arg241 to Ser439 are Y-domain. Cys434 and Cys481 form a disulfide bridge. Residues Phe442–Pro509 form a protease region. The zinc-binding stretch occupies residues Ala510–Ala691. Residues His671, Glu673, and His686 each contribute to the Zn(2+) site. The disordered stretch occupies residues Pro712–Thr771. The segment at Pro712–Arg778 is hinge. Residues Pro725–Thr735 show a composition bias toward low complexity. Over residues Pro736–Ser748 the composition is skewed to pro residues. The Macro domain occupies Ala775–Trp921. The interval Pro785–Ala942 is X-domain. In terms of domain architecture, (+)RNA virus helicase ATP-binding spans Ile934 to Trp1082. The interval Gly960–Phe1204 is NTPase/helicase. Position 975-982 (Gly975–Ser982) interacts with ATP. Positions His1083–Ser1216 constitute a (+)RNA virus helicase C-terminal domain. Residues Gly1207 to Glu1693 are RNA-directed RNA polymerase. Residues Ser1454–Gly1565 form the RdRp catalytic domain.

The protein belongs to the hepevirus non-structural polyprotein family. The protease domain interacts with host EIF2AK4 (via C-terminus); this interaction inhibits dimerization of EIF2AK4 and prevents EIF2AK4-mediated phosphorylation of host EIF2A. Requires Mg(2+) as cofactor. ORF1 polyprotein does not seem to be processed into distinct enzymatic domains by a viral protease belonging to ORF1, but could be processed by a host serine protease like thrombin.

The protein resides in the host cytoplasm. It localises to the host perinuclear region. The enzyme catalyses RNA(n) + a ribonucleoside 5'-triphosphate = RNA(n+1) + diphosphate. The catalysed reaction is GTP + S-adenosyl-L-methionine = N(7)-methyl-GTP + S-adenosyl-L-homocysteine. Putative protease: Inhibited by chymostatin. Functionally, methyltransferase: Displays a capping enzyme activity. This function is necessary since all viral RNAs are synthesized in the cytoplasm, and host capping enzymes are restricted to the nucleus. The enzymatic reaction involves a covalent link between 7-methyl-GMP and the methyltransferase, whereas eukaryotic capping enzymes form a covalent complex only with GMP. Methyltransferase catalyzes transfer of a methyl group from S-adenosylmethionine to GTP and GDP to yield m(7)GTP or m(7)GDP. GDP is a better substrate than GTP. This enzyme also displays guanylyltransferase activity to form a covalent complex, methyltransferase-m(7)GMP, from which 7-methyl-GMP is transferred to the mRNA to create the cap structure. In terms of biological role, Y-domain: Indispensable for virus replication. Putative protease: The putative protease domain although necessary for replication of the virus may not be a protease but rather a structural Zn(2+)-binding domain. Inhibits induction of IFN-beta by MDA5 and RIG-I pathways and down-regulates the expression of MDA5. Its function is as follows. NTPase/helicase: Multi-functional protein that exhibits NTPase and RNA unwinding activities. Hydrolyzes all NTPs efficiently and unwinds RNA duplexes containing 5' overhangs. Possesses a sequence independent RNA-5'-triphosphatase (RTPase) activity suggestive of its role in forming viral cap structure. Also participates in viral genome replication, RNA translocation and genome packaging/unpackaging. Functionally, RNA-directed RNA polymerase: Plays an essential role in the virus replication. Binds to the 3'-end of the genomic RNA to initiate viral replication. The sequence is that of Non-structural polyprotein pORF1 from Hepatitis E virus genotype 1 (isolate Human/Pakistan/Sar-55) (HEV-1).